Reading from the N-terminus, the 309-residue chain is Peptide methionine sulfoxide reductase MsrA/MsrB (309 aa).

Residues 1 to 153 form a peptide methionine sulfoxide reductase A region; it reads MIYLAGGCFW…PNGYCHIDIN (153 aa). Cys-8 is an active-site residue. A MsrB domain is found at 170–293; it reads ATEIKEKLSA…NSLSITFIPK (124 aa). The active-site Nucleophile is Cys-282.

It in the N-terminal section; belongs to the MsrA Met sulfoxide reductase family. In the C-terminal section; belongs to the MsrB Met sulfoxide reductase family.

The catalysed reaction is L-methionyl-[protein] + [thioredoxin]-disulfide + H2O = L-methionyl-(S)-S-oxide-[protein] + [thioredoxin]-dithiol. It catalyses the reaction [thioredoxin]-disulfide + L-methionine + H2O = L-methionine (S)-S-oxide + [thioredoxin]-dithiol. The enzyme catalyses L-methionyl-[protein] + [thioredoxin]-disulfide + H2O = L-methionyl-(R)-S-oxide-[protein] + [thioredoxin]-dithiol. Has an important function as a repair enzyme for proteins that have been inactivated by oxidation. Catalyzes the reversible oxidation-reduction of methionine sulfoxide in proteins to methionine. This Streptococcus pyogenes serotype M1 protein is Peptide methionine sulfoxide reductase MsrA/MsrB (msrAB).